The chain runs to 742 residues: Photosystem I P700 chlorophyll a apoprotein A2 (742 aa).

Transmembrane regions (helical) follow at residues 46-69 (LFSTHFGHLAIIALWVAGNLFHIA), 135-158 (LFQASIFMSILACWTLFAGWLHLQ), 175-199 (LNHHLAVLFGFSSIAWTGHLVHVAI), 273-291 (IAHHHIAIGTVFVIAGHMY), 336-359 (LHFQLGLALASLGVATSLVAQHMG), 375-401 (SALYSHHQYIAMFLMVGAFAHGAIFFV), 423-445 (ALISHLSWVTMLLGFHTLGIYVH), and 525-543 (FLVHHAIALGLHTTALILI). Residues cysteine 567 and cysteine 576 each contribute to the [4Fe-4S] cluster site. 2 helical membrane-spanning segments follow: residues 583–604 (AMYLAMFWALNLLAWVTFYWHW) and 651–673 (LSPWAWMFLFGHLVWATGFMFLI). Divinyl chlorophyll a contacts are provided by histidine 662, methionine 670, and tyrosine 678. Tryptophan 679 lines the phylloquinone pocket. A helical transmembrane segment spans residues 715–735 (LVGLAHFTIGNILTFGAFVIA).

The protein belongs to the PsaA/PsaB family. As to quaternary structure, the PsaA/B heterodimer binds the P700 divinyl chlorophyll special pair and subsequent electron acceptors. PSI consists of a core antenna complex that captures photons, and an electron transfer chain that converts photonic excitation into a charge separation. The cyanobacterial PSI reaction center is composed of one copy each of PsaA,B,C,D,E,F,I,J,K,L,M and X, and forms trimeric complexes. It depends on PSI electron transfer chain: 5 divinyl chlorophyll a, 1 divinyl chlorophyll a', 2 phylloquinones and 3 4Fe-4S clusters. PSI core antenna: 90 divinyl chlorophyll a, 22 carotenoids, 3 phospholipids and 1 galactolipid. P700 is a divinyl chlorophyll a/divinyl chlorophyll a' dimer, A0 is one or more divinyl chlorophyll a, A1 is one or both phylloquinones and FX is a shared 4Fe-4S iron-sulfur center. as a cofactor.

It is found in the cellular thylakoid membrane. The catalysed reaction is reduced [plastocyanin] + hnu + oxidized [2Fe-2S]-[ferredoxin] = oxidized [plastocyanin] + reduced [2Fe-2S]-[ferredoxin]. In terms of biological role, psaA and PsaB bind P700, the primary electron donor of photosystem I (PSI), as well as the electron acceptors A0, A1 and FX. PSI is a plastocyanin/cytochrome c6-ferredoxin oxidoreductase, converting photonic excitation into a charge separation, which transfers an electron from the donor P700 chlorophyll pair to the spectroscopically characterized acceptors A0, A1, FX, FA and FB in turn. Oxidized P700 is reduced on the lumenal side of the thylakoid membrane by plastocyanin or cytochrome c6. The polypeptide is Photosystem I P700 chlorophyll a apoprotein A2 (Prochlorococcus marinus (strain MIT 9301)).